The following is a 380-amino-acid chain: Putative 8-amino-7-oxononanoate synthase (380 aa).

Residue Arg-18 coordinates substrate. A pyridoxal 5'-phosphate-binding site is contributed by 106 to 107 (GY). His-131 is a binding site for substrate. Residues Ser-179, 205–208 (DEAH), and 236–239 (TFGK) each bind pyridoxal 5'-phosphate. Lys-239 is modified (N6-(pyridoxal phosphate)lysine). Position 352 (Thr-352) interacts with substrate.

The protein belongs to the class-II pyridoxal-phosphate-dependent aminotransferase family. BioF subfamily. As to quaternary structure, homodimer. Pyridoxal 5'-phosphate is required as a cofactor.

The catalysed reaction is 6-carboxyhexanoyl-[ACP] + L-alanine + H(+) = (8S)-8-amino-7-oxononanoate + holo-[ACP] + CO2. It functions in the pathway cofactor biosynthesis; biotin biosynthesis. Functionally, catalyzes the decarboxylative condensation of pimeloyl-[acyl-carrier protein] and L-alanine to produce 8-amino-7-oxononanoate (AON), [acyl-carrier protein], and carbon dioxide. This chain is Putative 8-amino-7-oxononanoate synthase (bioF), found in Neisseria meningitidis serogroup B (strain ATCC BAA-335 / MC58).